The sequence spans 339 residues: Transcription initiation factor IIB (339 aa).

Residues 39–70 (EELICPMCGSKNIIKDYERAEIVCETCGCVLQ) form a TFIIB-type zinc finger. Zn(2+) contacts are provided by C43, C46, C62, and C65. Repeat copies occupy residues 156–239 (SELD…SREL) and 250–331 (DYVP…ELTE).

The protein belongs to the TFIIB family.

Stabilizes TBP binding to an archaeal box-A promoter. Also responsible for recruiting RNA polymerase II to the pre-initiation complex (DNA-TBP-TFIIB). The polypeptide is Transcription initiation factor IIB (Methanothermococcus thermolithotrophicus (Methanococcus thermolithotrophicus)).